A 92-amino-acid chain; its full sequence is Acylphosphatase (92 aa).

The 88-residue stretch at 5–92 (YIVAYVYGVV…TPFETFSIRY (88 aa)) folds into the Acylphosphatase-like domain. Residues Arg20 and Asn38 contribute to the active site.

It belongs to the acylphosphatase family.

The enzyme catalyses an acyl phosphate + H2O = a carboxylate + phosphate + H(+). The chain is Acylphosphatase (acyP) from Yersinia pseudotuberculosis serotype O:1b (strain IP 31758).